A 123-amino-acid polypeptide reads, in one-letter code: Large ribosomal subunit protein uL14 (123 aa).

Belongs to the universal ribosomal protein uL14 family. In terms of assembly, part of the 50S ribosomal subunit. Forms a cluster with proteins L3 and L19. In the 70S ribosome, L14 and L19 interact and together make contacts with the 16S rRNA in bridges B5 and B8.

Functionally, binds to 23S rRNA. Forms part of two intersubunit bridges in the 70S ribosome. This chain is Large ribosomal subunit protein uL14, found in Corynebacterium urealyticum (strain ATCC 43042 / DSM 7109).